Consider the following 330-residue polypeptide: GTPase Obg (330 aa).

The region spanning 1 to 159 is the Obg domain; it reads MHFIDEVKIY…MWIHLSLKLL (159 aa). Residues 160–327 enclose the OBG-type G domain; that stretch reads SDVGLVGLPN…IVKLALETIK (168 aa). Residues 166 to 173, 191 to 195, 212 to 215, 279 to 282, and 308 to 310 contribute to the GTP site; these read GLPNAGKS, FTTLV, DIPG, NKCD, and STC. Mg(2+) contacts are provided by Ser-173 and Thr-193.

It belongs to the TRAFAC class OBG-HflX-like GTPase superfamily. OBG GTPase family. In terms of assembly, monomer. Mg(2+) serves as cofactor.

Its subcellular location is the cytoplasm. An essential GTPase which binds GTP, GDP and possibly (p)ppGpp with moderate affinity, with high nucleotide exchange rates and a fairly low GTP hydrolysis rate. Plays a role in control of the cell cycle, stress response, ribosome biogenesis and in those bacteria that undergo differentiation, in morphogenesis control. The polypeptide is GTPase Obg (Rickettsia rickettsii (strain Iowa)).